The sequence spans 258 residues: Shikimate dehydrogenase (NADP(+)) (258 aa).

Residues 14 to 16 (SES) and T61 each bind shikimate. Catalysis depends on K65, which acts as the Proton acceptor. Residues N86 and D101 each contribute to the shikimate site. Residues 125–129 (GSGGS) and L211 contribute to the NADP(+) site. Y213 is a binding site for shikimate. G234 is a binding site for NADP(+).

It belongs to the shikimate dehydrogenase family. Homodimer.

It carries out the reaction shikimate + NADP(+) = 3-dehydroshikimate + NADPH + H(+). Its pathway is metabolic intermediate biosynthesis; chorismate biosynthesis; chorismate from D-erythrose 4-phosphate and phosphoenolpyruvate: step 4/7. Functionally, involved in the biosynthesis of the chorismate, which leads to the biosynthesis of aromatic amino acids. Catalyzes the reversible NADPH linked reduction of 3-dehydroshikimate (DHSA) to yield shikimate (SA). The protein is Shikimate dehydrogenase (NADP(+)) of Clostridium botulinum (strain 657 / Type Ba4).